We begin with the raw amino-acid sequence, 241 residues long: 2,3,4,5-tetrahydropyridine-2,6-dicarboxylate N-acetyltransferase (241 aa).

Belongs to the transferase hexapeptide repeat family. DapH subfamily.

The catalysed reaction is (S)-2,3,4,5-tetrahydrodipicolinate + acetyl-CoA + H2O = L-2-acetamido-6-oxoheptanedioate + CoA. The protein operates within amino-acid biosynthesis; L-lysine biosynthesis via DAP pathway; LL-2,6-diaminopimelate from (S)-tetrahydrodipicolinate (acetylase route): step 1/3. Catalyzes the transfer of an acetyl group from acetyl-CoA to tetrahydrodipicolinate. The sequence is that of 2,3,4,5-tetrahydropyridine-2,6-dicarboxylate N-acetyltransferase from Caldanaerobacter subterraneus subsp. tengcongensis (strain DSM 15242 / JCM 11007 / NBRC 100824 / MB4) (Thermoanaerobacter tengcongensis).